The following is a 341-amino-acid chain: Ferredoxin--NADP reductase 2 (341 aa).

Residues Asp-42, Gln-50, Tyr-55, Ile-95, Phe-129, Asp-294, and Ser-335 each contribute to the FAD site.

It belongs to the ferredoxin--NADP reductase type 2 family. In terms of assembly, homodimer. Requires FAD as cofactor.

It carries out the reaction 2 reduced [2Fe-2S]-[ferredoxin] + NADP(+) + H(+) = 2 oxidized [2Fe-2S]-[ferredoxin] + NADPH. The sequence is that of Ferredoxin--NADP reductase 2 from Chloroherpeton thalassium (strain ATCC 35110 / GB-78).